We begin with the raw amino-acid sequence, 554 residues long: NADH-quinone oxidoreductase subunit N 3 (554 aa).

Transmembrane regions (helical) follow at residues 35–55 (LMPV…EAFV), 65–85 (LFLT…LAAG), 105–125 (PTLF…FTFA), 161–181 (GFTT…LLVF), 187–207 (LLTL…LCAV), 222–242 (YFLL…LLYG), 275–295 (ALLL…VGAV), 322–342 (VAAF…LAWD), 345–365 (PVMW…AITQ), 371–391 (LLAY…IAAS), 398–418 (VLFY…VVTL), 442–462 (VAAV…TSGF), 476–496 (GAGA…FFYI), and 525–545 (IAVG…FLDL).

It belongs to the complex I subunit 2 family. As to quaternary structure, NDH-1 is composed of 14 different subunits. Subunits NuoA, H, J, K, L, M, N constitute the membrane sector of the complex.

Its subcellular location is the cell membrane. The catalysed reaction is a quinone + NADH + 5 H(+)(in) = a quinol + NAD(+) + 4 H(+)(out). Functionally, NDH-1 shuttles electrons from NADH, via FMN and iron-sulfur (Fe-S) centers, to quinones in the respiratory chain. The immediate electron acceptor for the enzyme in this species is believed to be a menaquinone. Couples the redox reaction to proton translocation (for every two electrons transferred, four hydrogen ions are translocated across the cytoplasmic membrane), and thus conserves the redox energy in a proton gradient. The sequence is that of NADH-quinone oxidoreductase subunit N 3 from Streptomyces griseus subsp. griseus (strain JCM 4626 / CBS 651.72 / NBRC 13350 / KCC S-0626 / ISP 5235).